The following is a 166-amino-acid chain: Cytochrome c-type biogenesis protein CcmE (166 aa).

Residues 1-8 (MNAVRRKK) lie on the Cytoplasmic side of the membrane. The chain crosses the membrane as a helical; Signal-anchor for type II membrane protein span at residues 9–29 (LMWVMFTLAGAVIAVALVIYA). Topologically, residues 30-166 (IGKQTDYYFD…KLHETKTLQQ (137 aa)) are periplasmic. Positions 124 and 128 each coordinate heme. Residues 133-166 (VAKSMKENNRSGAVPSSEQYNPAEKLHETKTLQQ) are disordered. A compositionally biased stretch (polar residues) spans 142–152 (RSGAVPSSEQY). Residues 156-166 (EKLHETKTLQQ) are compositionally biased toward basic and acidic residues.

This sequence belongs to the CcmE/CycJ family.

The protein resides in the cell inner membrane. In terms of biological role, heme chaperone required for the biogenesis of c-type cytochromes. Transiently binds heme delivered by CcmC and transfers the heme to apo-cytochromes in a process facilitated by CcmF and CcmH. This chain is Cytochrome c-type biogenesis protein CcmE, found in Psychrobacter arcticus (strain DSM 17307 / VKM B-2377 / 273-4).